Here is a 1065-residue protein sequence, read N- to C-terminus: Probable importin-7 homolog (1065 aa).

The 74-residue stretch at 25 to 98 folds into the Importin N-terminal domain; that stretch reads AEAQLQQIKV…KENLIDLLVH (74 aa). The disordered stretch occupies residues 958-996; sequence ENGGDLGEDEGDNFDDQNDDDDQDSEEDLFEDEDTPDFE. Acidic residues predominate over residues 963–996; the sequence is LGEDEGDNFDDQNDDDDQDSEEDLFEDEDTPDFE.

This sequence belongs to the importin beta family.

It is found in the cytoplasm. The protein resides in the nucleus. Functionally, may function in nuclear protein import. The polypeptide is Probable importin-7 homolog (Dictyostelium discoideum (Social amoeba)).